A 1081-amino-acid polypeptide reads, in one-letter code: Histone demethylase-like protein A (1081 aa).

The tract at residues 37–173 is disordered; it reads QHLQHPSLPN…LSGNTDYARY (137 aa). The span at 66 to 81 shows a compositional bias: low complexity; the sequence is SPSCNESNESNGETSS. Over residues 119–132 the composition is skewed to polar residues; that stretch reads DTSNILSGSATSVS. The segment covering 141 to 161 has biased composition (low complexity); sequence NSTPPSTVNNVPSSSSITSDS. Residues 192–287 enclose the SWIRM domain; the sequence is CVTAAYACRL…FGCVEIPPAL (96 aa). The tract at residues 902-940 is disordered; that stretch reads ATAQKKKEPPCSNGFSAPVSTSAHPTDASAPARSNNSFS. Residues 914-925 are compositionally biased toward polar residues; that stretch reads NGFSAPVSTSAH. Positions 969–1049 form a DNA-binding region, HMG box; it reads ARTGLNPFLL…TNTEIWDRWK (81 aa).

It belongs to the flavin monoamine oxidase family.

Its subcellular location is the nucleus. Its function is as follows. H3K4 demethylase-like protein. Might not act as a H3K4 demethylase or is not the major H3K4 demethylase since its deletion does not affect whole genome H3K4 methylation. The chain is Histone demethylase-like protein A from Aspergillus fumigatus (strain ATCC MYA-4609 / CBS 101355 / FGSC A1100 / Af293) (Neosartorya fumigata).